The primary structure comprises 509 residues: Ankyrin repeat domain-containing protein 13C (509 aa).

Basic and acidic residues predominate over residues 1–19 (MTGEKIRSLHRDQKPSKDE). A disordered region spans residues 1–42 (MTGEKIRSLHRDQKPSKDEDLLEPDEEATAGGTFTRTGKLKN). 3 ANK repeats span residues 79-110 (DAYF…QKDN), 111-140 (HGNT…PVKV), and 144-173 (QGWS…QQSR).

It is found in the endoplasmic reticulum membrane. Functionally, acts as a molecular chaperone for G protein-coupled receptors, regulating their biogenesis and exit from the ER. In Xenopus tropicalis (Western clawed frog), this protein is Ankyrin repeat domain-containing protein 13C (ankrd13c).